The sequence spans 311 residues: Ribosomal RNA small subunit methyltransferase H (311 aa).

S-adenosyl-L-methionine-binding positions include 32–34, Asp52, Phe78, Asp99, and Gln106; that span reads GGH.

This sequence belongs to the methyltransferase superfamily. RsmH family.

It localises to the cytoplasm. It carries out the reaction cytidine(1402) in 16S rRNA + S-adenosyl-L-methionine = N(4)-methylcytidine(1402) in 16S rRNA + S-adenosyl-L-homocysteine + H(+). Functionally, specifically methylates the N4 position of cytidine in position 1402 (C1402) of 16S rRNA. The protein is Ribosomal RNA small subunit methyltransferase H of Halothermothrix orenii (strain H 168 / OCM 544 / DSM 9562).